The following is a 1612-amino-acid chain: DNA topoisomerase 2-beta (1612 aa).

Ala2 bears the N-acetylalanine mark. The residue at position 3 (Lys3) is an N6-acetyllysine. Glycyl lysine isopeptide (Lys-Gly) (interchain with G-Cter in SUMO2) cross-links involve residues Lys21 and Lys22. ATP is bound by residues Asn100, Asn129, and 157–159; that span reads SSN. Glycyl lysine isopeptide (Lys-Gly) (interchain with G-Cter in SUMO2) cross-links involve residues Lys165 and Lys166. An ATP-binding site is contributed by 170 to 177; sequence GRNGYGAK. Glycyl lysine isopeptide (Lys-Gly) (interchain with G-Cter in SUMO2) cross-links involve residues Lys216 and Lys287. The tract at residues 351 to 353 is interaction with DNA; sequence KKK. Glycyl lysine isopeptide (Lys-Gly) (interchain with G-Cter in SUMO2) cross-links involve residues Lys355 and Lys361. ATP is bound at residue 385–387; sequence QTK. Glycyl lysine isopeptide (Lys-Gly) (interchain with G-Cter in SUMO2) cross-links involve residues Lys425, Lys427, and Lys434. The 118-residue stretch at 464–581 folds into the Toprim domain; the sequence is CTLILTEGDS…SLLKHGFLEE (118 aa). Residues Glu470, Asp550, and Asp552 each coordinate Mg(2+). Glycyl lysine isopeptide (Lys-Gly) (interchain with G-Cter in SUMO2) cross-links involve residues Lys588, Lys593, Lys623, Lys631, Lys634, Lys664, and Lys700. Positions 724-1177 constitute a Topo IIA-type catalytic domain; sequence IPSLVDGFKP…SPSDLWKEDL (454 aa). The O-(5'-phospho-DNA)-tyrosine intermediate role is filled by Tyr814. An interaction with DNA region spans residues 999–1008; sequence KLQTTLTCNS. A Glycyl lysine isopeptide (Lys-Gly) (interchain with G-Cter in SUMO2) cross-link involves residue Lys1080. The disordered stretch occupies residues 1098-1128; sequence AWKEAQEKAAEEEDTQNQHDDSSSDSGTPSG. Glycyl lysine isopeptide (Lys-Gly) (interchain with G-Cter in SUMO2) cross-links involve residues Lys1202, Lys1205, Lys1214, and Lys1215. Ser1224 is modified (phosphoserine). Glycyl lysine isopeptide (Lys-Gly) (interchain with G-Cter in SUMO2) cross-links involve residues Lys1238, Lys1250, and Lys1259. The interval 1245–1586 is disordered; sequence LLKKKKGDPD…FTSEPPALPR (342 aa). Thr1280 bears the Phosphothreonine mark. Glycyl lysine isopeptide (Lys-Gly) (interchain with G-Cter in SUMO2) cross-links involve residues Lys1311 and Lys1315. Composition is skewed to basic and acidic residues over residues 1322 to 1332 and 1346 to 1358; these read PWSDDESKSES and SLLR…RPKY. A phosphoserine mark is found at Ser1324, Ser1328, Ser1330, Ser1332, and Ser1346. Tyr1358 bears the Phosphotyrosine mark. Positions 1362 to 1379 are enriched in acidic residues; the sequence is FSEEEEEDADDDDDNNDL. At Ser1363 the chain carries Phosphoserine. Residue Lys1385 forms a Glycyl lysine isopeptide (Lys-Gly) (interchain with G-Cter in SUMO2) linkage. A Phosphoserine modification is found at Ser1387. At Thr1390 the chain carries Phosphothreonine. A Phosphoserine modification is found at Ser1400. Tyr1408 carries the post-translational modification Phosphotyrosine. Ser1411 bears the Phosphoserine mark. The span at 1417–1429 shows a compositional bias: basic and acidic residues; the sequence is ATPEKSSHDKKSQ. Residue Lys1427 forms a Glycyl lysine isopeptide (Lys-Gly) (interchain with G-Cter in SUMO2) linkage. A phosphoserine mark is found at Ser1428, Ser1439, and Ser1441. Lys1443 participates in a covalent cross-link: Glycyl lysine isopeptide (Lys-Gly) (interchain with G-Cter in SUMO2). Over residues 1443–1453 the composition is skewed to basic and acidic residues; it reads KSEDDSAKFDS. Residues Ser1448, Ser1453, and Ser1460 each carry the phosphoserine modification. A Glycyl lysine isopeptide (Lys-Gly) (interchain with G-Cter in SUMO2) cross-link involves residue Lys1477. An interaction with PLSCR1 region spans residues 1493–1499; it reads KAKRAPK. Phosphoserine occurs at positions 1509, 1511, and 1513. The span at 1526 to 1536 shows a compositional bias: basic residues; that stretch reads GKGRGAKKRKA. A phosphoserine mark is found at Ser1537 and Ser1539. Positions 1550–1561 are enriched in basic residues; sequence KPSKTASKKPKK. A Phosphothreonine modification is found at Thr1562. Phosphoserine occurs at positions 1563 and 1568. Tyr1596 is subject to Phosphotyrosine. Position 1600 is a phosphoserine (Ser1600).

Belongs to the type II topoisomerase family. Homodimer. Interacts with PLSCR1 and KIAA1210. It depends on Mg(2+) as a cofactor. Requires Mn(2+) as cofactor. Ca(2+) is required as a cofactor.

Its subcellular location is the nucleus. It is found in the nucleolus. The protein localises to the nucleoplasm. The enzyme catalyses ATP-dependent breakage, passage and rejoining of double-stranded DNA.. Its function is as follows. Key decatenating enzyme that alters DNA topology by binding to two double-stranded DNA molecules, generating a double-stranded break in one of the strands, passing the intact strand through the broken strand, and religating the broken strand. The polypeptide is DNA topoisomerase 2-beta (TOP2B) (Cricetulus longicaudatus (Long-tailed dwarf hamster)).